Reading from the N-terminus, the 201-residue chain is ATP-dependent Clp protease proteolytic subunit (201 aa).

The active-site Nucleophile is the Ser100. Residue His125 is part of the active site.

Belongs to the peptidase S14 family. As to quaternary structure, component of the chloroplastic Clp protease core complex.

The protein resides in the plastid. The protein localises to the chloroplast stroma. It carries out the reaction Hydrolysis of proteins to small peptides in the presence of ATP and magnesium. alpha-casein is the usual test substrate. In the absence of ATP, only oligopeptides shorter than five residues are hydrolyzed (such as succinyl-Leu-Tyr-|-NHMec, and Leu-Tyr-Leu-|-Tyr-Trp, in which cleavage of the -Tyr-|-Leu- and -Tyr-|-Trp bonds also occurs).. Its function is as follows. Cleaves peptides in various proteins in a process that requires ATP hydrolysis. Has a chymotrypsin-like activity. Plays a major role in the degradation of misfolded proteins. This chain is ATP-dependent Clp protease proteolytic subunit, found in Ranunculus macranthus (Large buttercup).